We begin with the raw amino-acid sequence, 132 residues long: Small ribosomal subunit protein uS11 (132 aa).

It belongs to the universal ribosomal protein uS11 family. In terms of assembly, part of the 30S ribosomal subunit.

In terms of biological role, located on the platform of the 30S subunit. This Saccharolobus solfataricus (strain ATCC 35092 / DSM 1617 / JCM 11322 / P2) (Sulfolobus solfataricus) protein is Small ribosomal subunit protein uS11.